We begin with the raw amino-acid sequence, 738 residues long: Catalase-peroxidase 2 (738 aa).

Residues 1-26 (MKRTLPTLSALALSMSLALAAGQTQA) form the signal peptide. The segment at residues 104 to 226 (WHSAGVYRIF…LGATQMGLIY (123 aa)) is a cross-link (tryptophyl-tyrosyl-methioninium (Trp-Tyr) (with M-252)). The active-site Proton acceptor is histidine 105. A cross-link (tryptophyl-tyrosyl-methioninium (Tyr-Met) (with W-104)) is located at residues 226-252 (YVNPEGPNGVPDPLAAARDIRETFGRM). Histidine 267 provides a ligand contact to heme b.

Belongs to the peroxidase family. Peroxidase/catalase subfamily. Homodimer or homotetramer. Requires heme b as cofactor. In terms of processing, formation of the three residue Trp-Tyr-Met cross-link is important for the catalase, but not the peroxidase activity of the enzyme.

The catalysed reaction is H2O2 + AH2 = A + 2 H2O. It carries out the reaction 2 H2O2 = O2 + 2 H2O. In terms of biological role, bifunctional enzyme with both catalase and broad-spectrum peroxidase activity. This chain is Catalase-peroxidase 2, found in Shewanella amazonensis (strain ATCC BAA-1098 / SB2B).